The sequence spans 118 residues: Autophagy-related protein 8 (118 aa).

Gly-116 carries Phosphatidylethanolamine amidated glycine lipidation. The propeptide at 117 to 118 is removed in mature form; that stretch reads EA.

Belongs to the ATG8 family. In terms of assembly, conjugation to phosphatidylethanolamine (PE) leads to homodimerization. Interacts with ATG1, ATG3, ATG4, ATG7 and ATG12. Post-translationally, the C-terminal Glu-117 and Ala-118 residues of ATG8 are removed by ATG4 to expose Gly-116 at the C-terminus. This Gly-116 forms then a thioester bond with the 'Cys-550' of ATG7 (E1-like activating enzyme) before being transferred to the 'Cys-244' of ATG3 (the specific E2 conjugating enzyme), in order to be finally amidated with phosphatidylethanolamine. This lipid modification anchors ATG8 to membranes and can be reversed by ATG4, releasing soluble ATG8.

The protein localises to the cytoplasmic vesicle. The protein resides in the cvt vesicle membrane. It is found in the autophagosome membrane. Its subcellular location is the vacuole membrane. In terms of biological role, ubiquitin-like modifier involved in cytoplasm to vacuole transport (Cvt) vesicles and autophagosome formation. With ATG4, mediates the delivery of the vesicles and autophagosomes to the vacuole via the microtubule cytoskeleton. Required for selective autophagic degradation of the nucleus (nucleophagy) as well as for mitophagy which contributes to regulate mitochondrial quantity and quality by eliminating the mitochondria to a basal level to fulfill cellular energy requirements and preventing excess ROS production. Also participates in membrane fusion events that take place in the early secretory pathway. Also involved in endoplasmic reticulum-specific autophagic process and is essential for the survival of cells subjected to severe ER stress. The ATG8-PE conjugate mediates tethering between adjacent membranes and stimulates membrane hemifusion, leading to expansion of the autophagosomal membrane during autophagy. Moreover not only conjugation, but also subsequent ATG8-PE deconjugation is an important step required to facilitate multiple events during macroautophagy, and especially for efficient autophagosome biogenesis, the assembly of ATG9-containing tubulovesicular clusters into phagophores/autophagosomes, and for the disassembly of PAS-associated ATG components. Autophagy is required for proper vegetative growth, asexual/sexual reproduction, and full virulence. Autophagy is particularly involved in the biosynthesis of deoxynivalenol (DON), an important virulence determinant. In Gibberella zeae (strain ATCC MYA-4620 / CBS 123657 / FGSC 9075 / NRRL 31084 / PH-1) (Wheat head blight fungus), this protein is Autophagy-related protein 8.